Here is a 271-residue protein sequence, read N- to C-terminus: MFSIQQPLLVFSDLDGTLLDSHSYDWQPAAPWLSRLREANVPVILCSSKTSAEMLYLQKMLGLQGLPLIAENGAVIQLAEQWQEIDGFPRIISGISHGEISQVLNTLREKEHFKFTTFDDVDDATIAEWTGLSRSQAALTQLHEASVTLIWRDSDERMAQFTARLNELGLQFMQGARFWHVLDASAGKDQAANWIIATYQQLSGKRPTTLGLGDGPNDAPLLEVMDYAVIVKGLNREGVHLHDEDPARVWRTQREGPEGWREGLDHFFSAR.

D13 functions as the Nucleophile in the catalytic mechanism. Positions 13, 15, and 214 each coordinate Mg(2+).

The protein belongs to the HAD-like hydrolase superfamily. MPGP family. Requires Mg(2+) as cofactor.

It is found in the cytoplasm. The enzyme catalyses 2-O-(alpha-D-mannosyl)-3-phosphoglycerate + H2O = (2R)-2-O-(alpha-D-mannosyl)-glycerate + phosphate. The polypeptide is Mannosyl-3-phosphoglycerate phosphatase (yedP) (Escherichia coli O157:H7).